Here is a 127-residue protein sequence, read N- to C-terminus: MDEDTRLSRYLYLTDREHINVDSIKQLCKISDPNACYRCGCTALHEYFYNYRSVNGKYKYRYNGYYQYYSSSDYENYNEYYYDDYDRTGMNSESDSESDNISIKTEYENEYEFYDETQDQSTQHNDL.

Residues 86-127 (DRTGMNSESDSESDNISIKTEYENEYEFYDETQDQSTQHNDL) form a disordered region. A compositionally biased stretch (acidic residues) spans 108 to 118 (ENEYEFYDETQ).

This Homo sapiens (Human) protein is Protein B20.